Consider the following 78-residue polypeptide: Kassorin-S (78 aa).

Positions 1-22 (MLTLKKSMLLLFFLGMVSLSLA) are cleaved as a signal peptide. Positions 23 to 64 (NSKRADEEGEDKRADEEGEDKRADEEGEDKRADEEGEEKRKR) are excised as a propeptide. The segment at 24 to 60 (SKRADEEGEDKRADEEGEDKRADEEGEDKRADEEGEE) is disordered. The span at 25 to 60 (KRADEEGEDKRADEEGEDKRADEEGEDKRADEEGEE) shows a compositional bias: basic and acidic residues. Leucine 77 carries the leucine amide modification.

Belongs to the frog skin active peptide (FSAP) family. Brevinin subfamily. As to expression, expressed by the skin glands.

It localises to the secreted. Its function is as follows. Antimicrobial peptide. Active against the Gram-positive bacterium S.aureus (MIC=30 uM) and the yeast C.albicans (MIC=100 uM). Not effective against the Gram-negative bacterium E.coli at concentrations up to 250 uM. Lacks ability to induce contraction of smooth muscle in isolated guinea pig urinary bladder. Elicits histamine release from rat peritoneal mast cells. This Kassina senegalensis (Senegal running frog) protein is Kassorin-S.